We begin with the raw amino-acid sequence, 170 residues long: Photosystem I assembly protein Ycf3 (170 aa).

TPR repeat units lie at residues 35 to 69 (AFTYYRDGVMSAQSEGEYAEALQNYYEAMRPEIDP), 73 to 106 (SYILYNIGLIHMSNGEHTEALEYYFQALKRNPSL), and 121 to 154 (GEQAIRQGDPETAEAWSDRAAEYWKQAIALAPGN).

This sequence belongs to the Ycf3 family.

The protein localises to the plastid. The protein resides in the chloroplast thylakoid membrane. Functionally, essential for the assembly of the photosystem I (PSI) complex. May act as a chaperone-like factor to guide the assembly of the PSI subunits. The chain is Photosystem I assembly protein Ycf3 from Cycas taitungensis (Prince sago).